The following is a 334-amino-acid chain: Mitochondrial glycine transporter (334 aa).

3 Solcar repeats span residues 10 to 94 (SKSS…IRQA), 127 to 211 (LSNT…FKRR), and 234 to 318 (RAAA…LIMR). The next 6 membrane-spanning stretches (helical) occupy residues 16–41 (FVAGLGSGVLSAALLQPIDLLKTRVQ), 69–95 (GTVPSALRTGFGSALYFSTLNAIRQAA), 133–158 (LLAGGVARGFAGFVLMPLTVIKVRYE), 186–209 (GFGATALRDAPYAGLYVLLYEQFK), 238–264 (VNFSSGVLAAVACSVVSNPFDAVKTRI), and 293–311 (GLGLRMSRKALSSALAWTL).

Belongs to the mitochondrial carrier (TC 2.A.29) family. SLC25A38 subfamily.

Its subcellular location is the mitochondrion inner membrane. It carries out the reaction glycine(in) = glycine(out). In terms of biological role, mitochondrial glycine transporter that imports glycine into the mitochondrial matrix. Plays an important role in providing glycine for the first enzymatic step in heme biosynthesis, the condensation of glycine with succinyl-CoA to produce 5-aminolevulinate (ALA) in the mitochondrial matrix. The protein is Mitochondrial glycine transporter of Pyricularia oryzae (strain 70-15 / ATCC MYA-4617 / FGSC 8958) (Rice blast fungus).